We begin with the raw amino-acid sequence, 653 residues long: Calpain-10 (653 aa).

The region spanning 13-321 (LFRDAAFPAA…FDEITIGYPI (309 aa)) is the Calpain catalytic domain. Residues cysteine 73, histidine 238, and asparagine 263 contribute to the active site. Domain III stretches follow at residues 322-494 (TEAG…VSLS) and 513-653 (EWGT…PSWQ).

It belongs to the peptidase C2 family.

In terms of biological role, calcium-regulated non-lysosomal thiol-protease which catalyzes limited proteolysis of substrates involved in cytoskeletal remodeling and signal transduction. May play a role in insulin-stimulated glucose uptake. In Macaca fascicularis (Crab-eating macaque), this protein is Calpain-10 (CAPN10).